Consider the following 160-residue polypeptide: Transcription elongation factor GreA (160 aa).

The stretch at 49-75 forms a coiled coil; sequence SEYDEAKNDQAFTEGKILQLENKLKNA.

This sequence belongs to the GreA/GreB family.

Its function is as follows. Necessary for efficient RNA polymerase transcription elongation past template-encoded arresting sites. The arresting sites in DNA have the property of trapping a certain fraction of elongating RNA polymerases that pass through, resulting in locked ternary complexes. Cleavage of the nascent transcript by cleavage factors such as GreA or GreB allows the resumption of elongation from the new 3'terminus. GreA releases sequences of 2 to 3 nucleotides. The chain is Transcription elongation factor GreA from Clostridium botulinum (strain Alaska E43 / Type E3).